Here is a 220-residue protein sequence, read N- to C-terminus: IQ domain-containing protein F3 (220 aa).

The span at 1-22 (MELDQDQKVETPEAAENGKDEM) shows a compositional bias: basic and acidic residues. Residues 1–81 (MELDQDQKVE…KQIQDEKTGI (81 aa)) are disordered. Acidic residues predominate over residues 23–50 (QLEEQTQDEDTTETETETETETEAEAEG). A coiled-coil region spans residues 69–93 (QAEKQIQDEKTGIKEADRAIQEQTQ). Positions 146–175 (AELAGVKIQAWWRGTLVRRTLLLAILSAWT) constitute an IQ domain.

The polypeptide is IQ domain-containing protein F3 (Iqcf3) (Rattus norvegicus (Rat)).